Consider the following 634-residue polypeptide: Probable potassium transport system protein Kup 2 (634 aa).

Transmembrane regions (helical) follow at residues 15–35, 55–75, 101–121, 142–162, 173–193, 208–228, 252–272, 303–323, 351–371, 381–401, 408–428, and 435–455; these read LTLGAIGVVYGDIGTSPLYAF, VLSLALWALIIVVTLKYVIFL, WVAVTLLGATGAALFYGDAII, GMSQTAIIGVTVGILAALFMF, LFGPVCLVWFVALAGLGLWHI, AVTFLVSHGVTGLFVLGAVFL, WLSFVWPALTLNYLGQGALAL, LVILATLATIIASQAVITGAY, IYMPGVNWLLLGGVLLLVLGF, YGIAVTGTMVVTTCMAFLIAW, PVWTALLIAPFLALDLFFFGA, and EGGWVPLLVAGLVGLVIFTWL.

Belongs to the HAK/KUP transporter (TC 2.A.72) family.

The protein localises to the cell inner membrane. The catalysed reaction is K(+)(in) + H(+)(in) = K(+)(out) + H(+)(out). In terms of biological role, transport of potassium into the cell. Likely operates as a K(+):H(+) symporter. This Novosphingobium aromaticivorans (strain ATCC 700278 / DSM 12444 / CCUG 56034 / CIP 105152 / NBRC 16084 / F199) protein is Probable potassium transport system protein Kup 2.